The primary structure comprises 431 residues: Serine hydroxymethyltransferase 2 (431 aa).

Residues Leu-131 and 135–137 contribute to the (6S)-5,6,7,8-tetrahydrofolate site; that span reads GHL. An N6-(pyridoxal phosphate)lysine modification is found at Lys-240. Glu-256 contacts (6S)-5,6,7,8-tetrahydrofolate.

This sequence belongs to the SHMT family. In terms of assembly, homodimer. Pyridoxal 5'-phosphate serves as cofactor.

It localises to the cytoplasm. It carries out the reaction (6R)-5,10-methylene-5,6,7,8-tetrahydrofolate + glycine + H2O = (6S)-5,6,7,8-tetrahydrofolate + L-serine. It functions in the pathway one-carbon metabolism; tetrahydrofolate interconversion. Its pathway is amino-acid biosynthesis; glycine biosynthesis; glycine from L-serine: step 1/1. Its function is as follows. Catalyzes the reversible interconversion of serine and glycine with tetrahydrofolate (THF) serving as the one-carbon carrier. This reaction serves as the major source of one-carbon groups required for the biosynthesis of purines, thymidylate, methionine, and other important biomolecules. Also exhibits THF-independent aldolase activity toward beta-hydroxyamino acids, producing glycine and aldehydes, via a retro-aldol mechanism. This is Serine hydroxymethyltransferase 2 from Vibrio vulnificus (strain CMCP6).